The following is a 269-amino-acid chain: Interleukin-1 beta (269 aa).

Residues 1 to 116 (MAEVPELASE…TRNNDACVHD (116 aa)) constitute a propeptide that is removed on maturation.

This sequence belongs to the IL-1 family. As to quaternary structure, monomer. In its precursor form, weakly interacts with full-length MEFV; the mature cytokine does not interact at all. Interacts with integrins ITGAV:ITGBV and ITGA5:ITGB1; integrin-binding is required for IL1B signaling. Interacts with cargo receptor TMED10; the interaction is direct and is required for the secretion of IL1B mature form. Interacts with HSP90AB1; the interaction facilitates cargo translocation into the ERGIC. Interacts with HSP90B1; the interaction facilitates cargo translocation into the ERGIC.

The protein resides in the cytoplasm. The protein localises to the cytosol. It is found in the secreted. Its subcellular location is the lysosome. It localises to the extracellular exosome. Potent pro-inflammatory cytokine. Initially discovered as the major endogenous pyrogen, induces prostaglandin synthesis, neutrophil influx and activation, T-cell activation and cytokine production, B-cell activation and antibody production, and fibroblast proliferation and collagen production. Promotes Th17 differentiation of T-cells. Synergizes with IL12/interleukin-12 to induce IFNG synthesis from T-helper 1 (Th1) cells. Plays a role in angiogenesis by inducing VEGF production synergistically with TNF and IL6. Involved in transduction of inflammation downstream of pyroptosis: its mature form is specifically released in the extracellular milieu by passing through the gasdermin-D (GSDMD) pore. The polypeptide is Interleukin-1 beta (IL1B) (Macaca mulatta (Rhesus macaque)).